A 210-amino-acid polypeptide reads, in one-letter code: Rho-related GTP-binding protein RhoD (210 aa).

24 to 31 (GDGGCGKT) is a GTP binding site. The Effector region signature appears at 46-54 (YSPTVFERY). GTP contacts are provided by residues 71-75 (DTAGQ) and 129-132 (CKID). Residue cysteine 207 is modified to Cysteine methyl ester. The S-geranylgeranyl cysteine moiety is linked to residue cysteine 207. Positions 208–210 (LAT) are cleaved as a propeptide — removed in mature form.

It belongs to the small GTPase superfamily. Rho family. As to quaternary structure, interacts with PAK5. Interacts (in GTP-bound form) with DAPK3, FILIP1 and WHAMM. Interacts (independent of GTP-loaded status) with ANKFY1. Widely expressed.

The protein resides in the cell membrane. Its subcellular location is the early endosome. Involved in endosome dynamics. May coordinate membrane transport with the function of the cytoskeleton. Involved in the internalization and trafficking of activated tyrosine kinase receptors such as PDGFRB. Participates in the reorganization of actin cytoskeleton; the function seems to involve WHAMM and includes regulation of filopodia formation and actin filament bundling. Can modulate the effect of DAPK3 in reorganization of actin cytoskeleton and focal adhesion dissolution. This chain is Rho-related GTP-binding protein RhoD (Rhod), found in Mus musculus (Mouse).